The following is a 431-amino-acid chain: Glutamate-1-semialdehyde 2,1-aminomutase (431 aa).

K266 is subject to N6-(pyridoxal phosphate)lysine.

The protein belongs to the class-III pyridoxal-phosphate-dependent aminotransferase family. HemL subfamily. As to quaternary structure, homodimer. Pyridoxal 5'-phosphate serves as cofactor.

Its subcellular location is the cytoplasm. The enzyme catalyses (S)-4-amino-5-oxopentanoate = 5-aminolevulinate. It participates in porphyrin-containing compound metabolism; protoporphyrin-IX biosynthesis; 5-aminolevulinate from L-glutamyl-tRNA(Glu): step 2/2. This chain is Glutamate-1-semialdehyde 2,1-aminomutase, found in Wolinella succinogenes (strain ATCC 29543 / DSM 1740 / CCUG 13145 / JCM 31913 / LMG 7466 / NCTC 11488 / FDC 602W) (Vibrio succinogenes).